A 112-amino-acid chain; its full sequence is Protein FAM32A (112 aa).

Residues 15-35 are disordered; the sequence is KGCGDMSLGKKKKKKNKANDQ.

The protein belongs to the FAM32 family.

It is found in the nucleus. Its function is as follows. May induce G2 arrest and apoptosis. May also increase cell sensitivity to apoptotic stimuli. In Xenopus tropicalis (Western clawed frog), this protein is Protein FAM32A (fam32a).